The sequence spans 332 residues: D-amino acid oxidase (332 aa).

FAD-binding residues include A8, G9, I10, T39, T40, A45, G46, L47, V161, and S180. D-proline is bound by residues Y218 and R274. 2 residues coordinate D-serine: Y218 and R274. FAD contacts are provided by R274, G305, G306, G308, and T310. Residue G306 participates in D-proline binding. G306 is a D-serine binding site. A Microbody targeting signal motif is present at residues 330–332; the sequence is AKL.

This sequence belongs to the DAMOX/DASOX family. Requires FAD as cofactor.

The protein resides in the peroxisome matrix. It catalyses the reaction a D-alpha-amino acid + O2 + H2O = a 2-oxocarboxylate + H2O2 + NH4(+). The enzyme catalyses D-alanine + O2 + H2O = pyruvate + H2O2 + NH4(+). The catalysed reaction is D-arginine + O2 + H2O = 5-guanidino-2-oxopentanoate + H2O2 + NH4(+). It carries out the reaction D-asparagine + O2 + H2O = 2-oxosuccinamate + H2O2 + NH4(+). It catalyses the reaction D-cysteine + O2 + H2O = 2-oxo-3-sulfanylpropanoate + H2O2 + NH4(+). The enzyme catalyses D-glutamine + O2 + H2O = 2-oxoglutaramate + H2O2 + NH4(+). The catalysed reaction is D-isoleucine + O2 + H2O = (R)-3-methyl-2-oxopentanoate + H2O2 + NH4(+). It carries out the reaction D-leucine + O2 + H2O = 4-methyl-2-oxopentanoate + H2O2 + NH4(+). It catalyses the reaction D-lysine + O2 + H2O = 6-amino-2-oxohexanoate + H2O2 + NH4(+). The enzyme catalyses D-methionine + O2 + H2O = 4-methylsulfanyl-2-oxobutanoate + H2O2 + NH4(+). The catalysed reaction is D-phenylalanine + O2 + H2O = 3-phenylpyruvate + H2O2 + NH4(+). It carries out the reaction D-proline + O2 = 1-pyrroline-2-carboxylate + H2O2. It catalyses the reaction D-valine + O2 + H2O = 3-methyl-2-oxobutanoate + H2O2 + NH4(+). The enzyme catalyses D-histidine + O2 + H2O = 3-(imidazol-5-yl)pyruvate + H2O2 + NH4(+). The catalysed reaction is D-tyrosine + O2 + H2O = 3-(4-hydroxyphenyl)pyruvate + H2O2 + NH4(+). It carries out the reaction D-serine + O2 + H2O = 3-hydroxypyruvate + H2O2 + NH4(+). It catalyses the reaction D-threonine + O2 + H2O = (S)-3-hydroxy-2-oxobutanoate + H2O2 + NH4(+). The enzyme catalyses D-tryptophan + O2 + H2O = indole-3-pyruvate + H2O2 + NH4(+). Functionally, catalyzes the oxidative deamination of D-amino acids with broad substrate specificity. Could be responsible for the degradation of diet-derived D-alanine in the intestine. Maintains the asexual state of worms and represses early ovarian development. Following sexual induction, the enzyme is required for differentiation of oogonia into oocytes in the developing ovaries. The protein is D-amino acid oxidase of Dugesia ryukyuensis (Freshwater planarian flatworm).